A 275-amino-acid polypeptide reads, in one-letter code: MIRKPVVAGQFYPGTKNELEEMINSCIQHKFGPGNQIQNNEGIYGVISPHAGYVYSGPTACYSYKAISSKNPELVIILGPNHFGVGKDVATMVNAQWETPLGLVDVDSEAAKEIANNSKYIEIDEFSHSRDHSLEVQIPMLQSIFSEKFKILPIILRDQSLEMAKDVGNAVAQIAKSRNTMIVASSDFTHYEENSFAHSQDKALIEPILEMDVEKFYSVLMEKRVTACGYGAMASVMIACKNLGAVKGELLSYTTSGDVMGDTSSVVGYGAIKFI.

It belongs to the MEMO1 family.

This Nitrosopumilus maritimus (strain SCM1) protein is MEMO1 family protein Nmar_0215.